Consider the following 205-residue polypeptide: CASP-like protein 0U1 (205 aa).

The Cytoplasmic portion of the chain corresponds to 1-66 (MSGGDIDPTA…GYHKFAVFQF (66 aa)). In terms of domain architecture, MARVEL spans 10-162 (AINSPKFRLI…SMMFTWKEWR (153 aa)). A helical transmembrane segment spans residues 67–87 (LVVICVTYWLFTMLWMGMYLI). Residues 88 to 90 (QKV) are Extracellular-facing. A helical transmembrane segment spans residues 91-111 (PPAGTEFMIYAVFNVLILIAF). Residues 112-137 (STSWTECNETIVDPTYPVCKRATGAK) are Cytoplasmic-facing. The chain crosses the membrane as a helical span at residues 138-158 (ASIAFAMFTWLALCVSMMFTW). At 159 to 167 (KEWRDQNYE) the chain is on the extracellular side. A helical transmembrane segment spans residues 168–188 (GLPIFGDFSSFMPGGGGGGMG). Topologically, residues 189-205 (GGGGYERPSDVNTQTYA) are cytoplasmic.

The protein belongs to the Casparian strip membrane proteins (CASP) family. Homodimer and heterodimers.

Its subcellular location is the cell membrane. The protein is CASP-like protein 0U1 of Micromonas pusilla (strain CCMP1545) (Picoplanktonic green alga).